Here is a 48-residue protein sequence, read N- to C-terminus: ATP synthase protein 8 (48 aa).

The helical transmembrane segment at 12 to 32 (LLTFGMLAISMLLYLVSTIIL) threads the bilayer.

The protein belongs to the ATPase protein 8 family. In terms of assembly, F-type ATPases have 2 components, CF(1) - the catalytic core - and CF(0) - the membrane proton channel.

The protein resides in the mitochondrion membrane. In terms of biological role, mitochondrial membrane ATP synthase (F(1)F(0) ATP synthase or Complex V) produces ATP from ADP in the presence of a proton gradient across the membrane which is generated by electron transport complexes of the respiratory chain. F-type ATPases consist of two structural domains, F(1) - containing the extramembraneous catalytic core and F(0) - containing the membrane proton channel, linked together by a central stalk and a peripheral stalk. During catalysis, ATP synthesis in the catalytic domain of F(1) is coupled via a rotary mechanism of the central stalk subunits to proton translocation. Part of the complex F(0) domain. Minor subunit located with subunit a in the membrane. The sequence is that of ATP synthase protein 8 (ATP8) from Debaryomyces hansenii (strain ATCC 36239 / CBS 767 / BCRC 21394 / JCM 1990 / NBRC 0083 / IGC 2968) (Yeast).